A 727-amino-acid polypeptide reads, in one-letter code: Translation initiation factor IF-2, mitochondrial (727 aa).

A mitochondrion-targeting transit peptide spans 1-29 (MNRKILKLENLLRFHTICRQLHSLCQRRM). The 171-residue stretch at 178–348 (PRSPVVTIMG…IALAEMLELK (171 aa)) folds into the tr-type G domain. The segment at 187 to 194 (GHVDHGKT) is G1. A GTP-binding site is contributed by 187-194 (GHVDHGKT). A G2 region spans residues 212-216 (GITQH). GTP is bound by residues 234–237 (DTPG) and 288–291 (NKCD). The tract at residues 234-237 (DTPG) is G3. Residues 288-291 (NKCD) are G4. Residues 324 to 326 (SAL) are G5. Position 688 is a phosphothreonine (Thr-688).

Belongs to the TRAFAC class translation factor GTPase superfamily. Classic translation factor GTPase family. IF-2 subfamily. As to quaternary structure, monomer.

It localises to the mitochondrion. One of the essential components for the initiation of protein synthesis. Protects formylmethionyl-tRNA from spontaneous hydrolysis and promotes its binding to the 30S ribosomal subunits. Also involved in the hydrolysis of GTP during the formation of the 70S ribosomal complex. The chain is Translation initiation factor IF-2, mitochondrial (MTIF2) from Bos taurus (Bovine).